Consider the following 167-residue polypeptide: ATP synthase subunit b (167 aa).

The helical transmembrane segment at 10 to 30 threads the bilayer; the sequence is TFFFQLANTLIMFLILKHFLF.

It belongs to the ATPase B chain family. In terms of assembly, F-type ATPases have 2 components, F(1) - the catalytic core - and F(0) - the membrane proton channel. F(1) has five subunits: alpha(3), beta(3), gamma(1), delta(1), epsilon(1). F(0) has three main subunits: a(1), b(2) and c(10-14). The alpha and beta chains form an alternating ring which encloses part of the gamma chain. F(1) is attached to F(0) by a central stalk formed by the gamma and epsilon chains, while a peripheral stalk is formed by the delta and b chains.

The protein localises to the cell membrane. Its function is as follows. F(1)F(0) ATP synthase produces ATP from ADP in the presence of a proton or sodium gradient. F-type ATPases consist of two structural domains, F(1) containing the extramembraneous catalytic core and F(0) containing the membrane proton channel, linked together by a central stalk and a peripheral stalk. During catalysis, ATP synthesis in the catalytic domain of F(1) is coupled via a rotary mechanism of the central stalk subunits to proton translocation. In terms of biological role, component of the F(0) channel, it forms part of the peripheral stalk, linking F(1) to F(0). This is ATP synthase subunit b from Alkaliphilus oremlandii (strain OhILAs) (Clostridium oremlandii (strain OhILAs)).